A 224-amino-acid polypeptide reads, in one-letter code: Putative N-acetylmannosamine-6-phosphate 2-epimerase (224 aa).

The protein belongs to the NanE family.

The catalysed reaction is an N-acyl-D-glucosamine 6-phosphate = an N-acyl-D-mannosamine 6-phosphate. It participates in amino-sugar metabolism; N-acetylneuraminate degradation; D-fructose 6-phosphate from N-acetylneuraminate: step 3/5. Its function is as follows. Converts N-acetylmannosamine-6-phosphate (ManNAc-6-P) to N-acetylglucosamine-6-phosphate (GlcNAc-6-P). The polypeptide is Putative N-acetylmannosamine-6-phosphate 2-epimerase (Staphylococcus carnosus (strain TM300)).